Here is a 1306-residue protein sequence, read N- to C-terminus: Putative late blight resistance protein homolog R1A-10 (1306 aa).

Coiled coils occupy residues 407 to 428 (SDSL…ESLQ) and 520 to 542 (PRMK…KLLS). The NB-ARC domain occupies 521–808 (RMKEEIVGFE…SEAFIKSSEG (288 aa)). 554–561 (GMPGLGKT) is a binding site for ATP. LRR repeat units follow at residues 858–881 (AEEN…VYSH), 921–935 (LSSL…ILPN), 936–961 (FKFL…PYLR), 979–1007 (LWNL…VWDM), 1010–1035 (LRHL…NLDD), 1057–1081 (TPNL…ALNF), 1082–1106 (PIRL…ISAP), 1110–1129 (YLKL…TADH), 1130–1153 (LKNL…KVSN), 1156–1181 (FPQL…AFPN), and 1216–1240 (ESVV…NFKL). The 67-residue stretch at 1240-1306 (LVLIEKWPKF…KLRKCGMPGL (67 aa)) folds into the HMA domain.

Belongs to the disease resistance NB-LRR family.

The protein localises to the cytoplasm. The protein resides in the membrane. Functionally, confers resistance to late blight (Phytophthora infestans) races carrying the avirulence gene Avr1. Resistance proteins guard the plant against pathogens that contain an appropriate avirulence protein via an indirect interaction with this avirulence protein. That triggers a defense system including the hypersensitive response, which restricts the pathogen growth. In Solanum demissum (Wild potato), this protein is Putative late blight resistance protein homolog R1A-10 (R1A-10).